A 78-amino-acid chain; its full sequence is NAD(P)H-quinone oxidoreductase subunit O (78 aa).

This sequence belongs to the complex I NdhO subunit family. As to quaternary structure, NDH-1 can be composed of about 15 different subunits; different subcomplexes with different compositions have been identified which probably have different functions.

Its subcellular location is the cell inner membrane. It carries out the reaction a plastoquinone + NADH + (n+1) H(+)(in) = a plastoquinol + NAD(+) + n H(+)(out). The catalysed reaction is a plastoquinone + NADPH + (n+1) H(+)(in) = a plastoquinol + NADP(+) + n H(+)(out). In terms of biological role, NDH-1 shuttles electrons from an unknown electron donor, via FMN and iron-sulfur (Fe-S) centers, to quinones in the respiratory and/or the photosynthetic chain. The immediate electron acceptor for the enzyme in this species is believed to be plastoquinone. Couples the redox reaction to proton translocation, and thus conserves the redox energy in a proton gradient. Cyanobacterial NDH-1 also plays a role in inorganic carbon-concentration. This is NAD(P)H-quinone oxidoreductase subunit O from Gloeobacter violaceus (strain ATCC 29082 / PCC 7421).